Reading from the N-terminus, the 82-residue chain is Defensin-like protein 22 (82 aa).

A signal peptide spans 1 to 24 (MAGLKVFSFALLLILTFSLIDVEG). Disulfide bonds link Cys-34–Cys-82, Cys-44–Cys-69, Cys-53–Cys-78, and Cys-57–Cys-80.

This sequence belongs to the DEFL family.

The protein localises to the secreted. The chain is Defensin-like protein 22 from Arabidopsis thaliana (Mouse-ear cress).